Consider the following 315-residue polypeptide: Replication factor C small subunit (315 aa).

G43–T50 provides a ligand contact to ATP.

Belongs to the activator 1 small subunits family. RfcS subfamily. As to quaternary structure, heteromultimer composed of small subunits (RfcS) and large subunits (RfcL).

Functionally, part of the RFC clamp loader complex which loads the PCNA sliding clamp onto DNA. The sequence is that of Replication factor C small subunit from Methanococcus maripaludis (strain C6 / ATCC BAA-1332).